A 738-amino-acid chain; its full sequence is Polyribonucleotide nucleotidyltransferase (738 aa).

Positions 514 and 520 each coordinate Mg(2+). The region spanning 580–639 (PRIITVKIPVDKIGEVIGPKGKMINQIQEDTGAEITIEDDGTIYIGAQVGSQAEAARATI) is the KH domain. The region spanning 651–723 (GERYLGTVVK…SRGKLSLIPV (73 aa)) is the S1 motif domain.

This sequence belongs to the polyribonucleotide nucleotidyltransferase family. The cofactor is Mg(2+).

Its subcellular location is the cytoplasm. It carries out the reaction RNA(n+1) + phosphate = RNA(n) + a ribonucleoside 5'-diphosphate. Functionally, involved in mRNA degradation. Catalyzes the phosphorolysis of single-stranded polyribonucleotides processively in the 3'- to 5'-direction. This is Polyribonucleotide nucleotidyltransferase from Streptomyces avermitilis (strain ATCC 31267 / DSM 46492 / JCM 5070 / NBRC 14893 / NCIMB 12804 / NRRL 8165 / MA-4680).